A 274-amino-acid polypeptide reads, in one-letter code: UPF0758 protein RHE_CH01848 (274 aa).

Residues 1 to 37 (MAKGPVATSSDDELPFETEEPVADERSFFGGRPQKPA) form a disordered region. Residues 10–22 (SDDELPFETEEPV) are compositionally biased toward acidic residues. The 123-residue stretch at 152-274 (VLSSWSSVIQ…HVSLKGLKLI (123 aa)) folds into the MPN domain. 3 residues coordinate Zn(2+): His-223, His-225, and Asp-236. The short motif at 223-236 (HNHPSGDPTPSRAD) is the JAMM motif element.

The protein belongs to the UPF0758 family.

This Rhizobium etli (strain ATCC 51251 / DSM 11541 / JCM 21823 / NBRC 15573 / CFN 42) protein is UPF0758 protein RHE_CH01848.